We begin with the raw amino-acid sequence, 315 residues long: Homoserine kinase (315 aa).

Residue 97–107 participates in ATP binding; it reads PPARGLGSSAT.

This sequence belongs to the GHMP kinase family. Homoserine kinase subfamily.

The protein localises to the cytoplasm. It catalyses the reaction L-homoserine + ATP = O-phospho-L-homoserine + ADP + H(+). It participates in amino-acid biosynthesis; L-threonine biosynthesis; L-threonine from L-aspartate: step 4/5. Catalyzes the ATP-dependent phosphorylation of L-homoserine to L-homoserine phosphate. The chain is Homoserine kinase from Synechococcus sp. (strain WH7803).